Reading from the N-terminus, the 107-residue chain is Parvalbumin beta (107 aa).

Serine 1 carries the N-acetylserine modification. 2 EF-hand domains span residues 37-72 (KSLD…FSPS) and 76-107 (LTDA…MIKA). Ca(2+)-binding residues include aspartate 50, aspartate 52, serine 54, phenylalanine 56, glutamate 58, glutamate 61, aspartate 89, aspartate 91, aspartate 93, methionine 95, and glutamate 100.

This sequence belongs to the parvalbumin family.

Its function is as follows. In muscle, parvalbumin is thought to be involved in relaxation after contraction. It binds two calcium ions. The chain is Parvalbumin beta from Esox lucius (Northern pike).